Here is a 187-residue protein sequence, read N- to C-terminus: Elongation factor P (187 aa).

It belongs to the elongation factor P family.

Its subcellular location is the cytoplasm. It functions in the pathway protein biosynthesis; polypeptide chain elongation. Its function is as follows. Involved in peptide bond synthesis. Stimulates efficient translation and peptide-bond synthesis on native or reconstituted 70S ribosomes in vitro. Probably functions indirectly by altering the affinity of the ribosome for aminoacyl-tRNA, thus increasing their reactivity as acceptors for peptidyl transferase. This chain is Elongation factor P, found in Rhodococcus opacus (strain B4).